The following is a 287-amino-acid chain: Phospholipid phosphatase 2 (287 aa).

Topologically, residues 1-4 (MERR) are cytoplasmic. A helical transmembrane segment spans residues 5–25 (WVFVLLDVLCVLVAALPCAIL). Over 26–51 (TFVNTPYKRGFYCGDDSIRYPYRPDT) the chain is Lumenal. The helical transmembrane segment at 52 to 72 (ITHGLMAGVIITATVILVSAG) threads the bilayer. The Cytoplasmic portion of the chain corresponds to 73 to 87 (EAYLVYTDRLYSRSD). A helical membrane pass occupies residues 88 to 108 (FNNYLAALYKVVGTFLFGAAV). The Lumenal portion of the chain corresponds to 109 to 161 (SQSLTDLAKYMTGRLRPNFLAVCDPDWSRVNCSAYVQVEVCRGSSANVTESRL). The interval 117–125 (KYMTGRLRP) is phosphatase sequence motif I. Residues Asn139 and Asn155 are each glycosylated (N-linked (GlcNAc...) asparagine). The chain crosses the membrane as a helical span at residues 162–182 (SFYSGHSSFGMYCMVFLALYV). The segment at 164–167 (YSGH) is phosphatase sequence motif II. The active-site Proton donors is the His167. The Cytoplasmic portion of the chain corresponds to 183–193 (QARLCWKWARL). A helical transmembrane segment spans residues 194-211 (LRPTVQFFLVAFALYVGY). The Lumenal segment spans residues 212-218 (TRVSDHK). The interval 212 to 223 (TRVSDHKHHWSD) is phosphatase sequence motif III. His219 functions as the Nucleophile in the catalytic mechanism. The helical transmembrane segment at 219-239 (HHWSDVLVGLLQGALVASLTV) threads the bilayer. Topologically, residues 240 to 287 (RYISDFFKARPPQHCPEEEDLERKPSLSLTLALGETDCNHYGYPVSSS) are cytoplasmic.

This sequence belongs to the PA-phosphatase related phosphoesterase family. As to quaternary structure, forms functional homodimers and homooligomers. Can also form heterooligomers with PLPP1 and PLPP3. N-glycosylated.

Its subcellular location is the membrane. The protein localises to the cell membrane. It localises to the early endosome membrane. The protein resides in the endoplasmic reticulum membrane. The enzyme catalyses a 1,2-diacyl-sn-glycero-3-phosphate + H2O = a 1,2-diacyl-sn-glycerol + phosphate. It catalyses the reaction 1,2-dihexadecanoyl-sn-glycero-3-phosphate + H2O = 1,2-dihexadecanoyl-sn-glycerol + phosphate. The catalysed reaction is 1,2-di-(9Z-octadecenoyl)-sn-glycero-3-phosphate + H2O = 1,2-di-(9Z-octadecenoyl)-sn-glycerol + phosphate. It carries out the reaction a monoacyl-sn-glycero-3-phosphate + H2O = a monoacylglycerol + phosphate. The enzyme catalyses (9Z)-octadecenoyl-sn-glycero-3-phosphate + H2O = (9Z-octadecenoyl)-glycerol + phosphate. It catalyses the reaction sphing-4-enine 1-phosphate + H2O = sphing-4-enine + phosphate. The catalysed reaction is an N-acylsphing-4-enine 1-phosphate + H2O = an N-acylsphing-4-enine + phosphate. It carries out the reaction N-(octanoyl)-sphing-4-enine-1-phosphate + H2O = N-octanoylsphing-4-enine + phosphate. The enzyme catalyses N-(9Z-octadecenoyl)-ethanolamine phosphate + H2O = N-(9Z-octadecenoyl) ethanolamine + phosphate. It functions in the pathway lipid metabolism; phospholipid metabolism. With respect to regulation, magnesium-independent phospholipid phosphatase. Insensitive to N-ethylmaleimide. In terms of biological role, magnesium-independent phospholipid phosphatase that catalyzes the dephosphorylation of a variety of glycerolipid and sphingolipid phosphate esters including phosphatidate/PA, lysophosphatidate/LPA, sphingosine 1-phosphate/S1P and ceramide 1-phosphate/C1P. Has no apparent extracellular phosphatase activity and therefore most probably acts intracellularly. Also acts on N-oleoyl ethanolamine phosphate/N-(9Z-octadecenoyl)-ethanolamine phosphate, a potential physiological compound. Through dephosphorylation of these bioactive lipid mediators produces new bioactive compounds and may regulate signal transduction in different cellular processes. Indirectly regulates, for instance, cell cycle G1/S phase transition through its phospholipid phosphatase activity. This chain is Phospholipid phosphatase 2, found in Bos taurus (Bovine).